The following is a 320-amino-acid chain: Replication-associated protein ORF2 (320 aa).

Residues tyrosine 188 and tyrosine 192 each act as O-(5'-phospho-DNA)-tyrosine intermediate in the active site.

The protein belongs to the microviridae Rep protein family.

It carries out the reaction ATP + (deoxyribonucleotide)n-3'-hydroxyl + 5'-phospho-(deoxyribonucleotide)m = (deoxyribonucleotide)n+m + AMP + diphosphate.. Its function is as follows. Plays an essential role in viral DNA replication. Binds the origin of replication and cleaves the dsDNA replicative form I (RFI) and becomes covalently bound to it via phosphotyrosine bond, generating the dsDNA replicative form II (RFII). In turn, viral DNA replication initiates at the 3'-OH of the cleavage site. After one round of rolling circle synthesis, protein ORF2 is linked to the newly synthesized ssDNA and joins the ends of the displaced strand to generate a circular single-stranded molecule ready to be packed into a virion. This Spiroplasma virus 4 (SpV4) protein is Replication-associated protein ORF2.